The following is a 283-amino-acid chain: Phosphate import ATP-binding protein PstB (283 aa).

Residues 1 to 20 are compositionally biased toward polar residues; it reads MAQTLAQTKQISQSHTFDVS. A disordered region spans residues 1–32; sequence MAQTLAQTKQISQSHTFDVSQSHHKTPDDTNS. The 242-residue stretch at 37–278 folds into the ABC transporter domain; sequence YSTQNLDLWY…PSNKKTEDYI (242 aa). 69 to 76 provides a ligand contact to ATP; that stretch reads GPSGCGKS.

The protein belongs to the ABC transporter superfamily. Phosphate importer (TC 3.A.1.7) family. As to quaternary structure, the complex is composed of two ATP-binding proteins (PstB), two transmembrane proteins (PstC and PstA) and a solute-binding protein (PstS).

It localises to the cell membrane. It carries out the reaction phosphate(out) + ATP + H2O = ADP + 2 phosphate(in) + H(+). Its function is as follows. Part of the ABC transporter complex PstSACB involved in phosphate import. Responsible for energy coupling to the transport system. The sequence is that of Phosphate import ATP-binding protein PstB from Staphylococcus aureus (strain USA300).